Here is a 181-residue protein sequence, read N- to C-terminus: Kappa-casein (181 aa).

The first 21 residues, Met-1–Ala-21, serve as a signal peptide directing secretion. Thr-123 carries the phosphothreonine modification. Thr-134, Thr-144, and Thr-155 each carry an O-linked (GalNAc...) threonine glycan. Phosphoserine; alternate is present on Ser-162. An O-linked (GalNAc...) serine; alternate glycan is attached at Ser-162. Position 178 is a phosphoserine (Ser-178).

It belongs to the kappa-casein family. Mammary gland specific. Secreted in milk.

The protein localises to the secreted. Its function is as follows. Kappa-casein stabilizes micelle formation, preventing casein precipitation in milk. In Mus musculus (Mouse), this protein is Kappa-casein (Csn3).